Reading from the N-terminus, the 148-residue chain is SsrA-binding protein (148 aa).

It belongs to the SmpB family.

The protein resides in the cytoplasm. Functionally, required for rescue of stalled ribosomes mediated by trans-translation. Binds to transfer-messenger RNA (tmRNA), required for stable association of tmRNA with ribosomes. tmRNA and SmpB together mimic tRNA shape, replacing the anticodon stem-loop with SmpB. tmRNA is encoded by the ssrA gene; the 2 termini fold to resemble tRNA(Ala) and it encodes a 'tag peptide', a short internal open reading frame. During trans-translation Ala-aminoacylated tmRNA acts like a tRNA, entering the A-site of stalled ribosomes, displacing the stalled mRNA. The ribosome then switches to translate the ORF on the tmRNA; the nascent peptide is terminated with the 'tag peptide' encoded by the tmRNA and targeted for degradation. The ribosome is freed to recommence translation, which seems to be the essential function of trans-translation. The sequence is that of SsrA-binding protein from Ehrlichia ruminantium (strain Welgevonden).